The primary structure comprises 671 residues: Receptor-interacting serine/threonine-protein kinase 1 (671 aa).

Ser6 is subject to Phosphoserine; by IKKA and IKKB. Residues Phe17–Tyr289 enclose the Protein kinase domain. Ser20 carries the phosphoserine; by autocatalysis modification. ATP contacts are provided by residues Leu23–Val31 and Lys45. At Ser25 the chain carries Phosphoserine; by IKKA and IKKB. Asp138 (proton acceptor) is an active-site residue. Ser161 carries the post-translational modification Phosphoserine; by RIPK3 and autocatalysis. Ser166 is modified (phosphoserine; by autocatalysis). Residues Leu290–Leu582 are interaction with SQSTM1. At Ser303 the chain carries Phosphoserine. Residues Ser320, Ser331, and Ser333 each carry the phosphoserine; by MAP3K7 modification. Residues Ser331 to Gly348 are compositionally biased toward polar residues. Positions Ser331–Val354 are disordered. Residue Lys377 forms a Glycyl lysine isopeptide (Lys-Gly) (interchain with G-Cter in ubiquitin) linkage. Tyr384 carries the post-translational modification Phosphotyrosine. Residues Ser389–Leu455 are disordered. Residues Asn428–Ser444 are compositionally biased toward polar residues. Positions Tyr531–Met547 match the RIP homotypic interaction motif (RHIM) motif. In terms of domain architecture, Death spans Thr583 to Ser669. Arg603 is a glycosylation site ((Microbial infection) N-beta-linked (GlcNAc) arginine).

Belongs to the protein kinase superfamily. TKL Ser/Thr protein kinase family. As to quaternary structure, homodimer. Interacts (via RIP homotypic interaction motif) with RIPK3 (via RIP homotypic interaction motif); this interaction induces RIPK1 phosphorylation and formation of a RIPK1-RIPK3 necroptosis-inducing complex. Upon TNF-induced necrosis, the RIPK1-RIPK3 dimer further interacts with PGAM5 and MLKL; the formation of this complex leads to PGAM5 phosphorylation and increase in PGAM5 phosphatase activity. Interacts (via the death domain) with TNFRSF6 (via the death domain) and TRADD (via the death domain). Is recruited by TRADD to TNFRSF1A in a TNF-dependent process. Binds RNF216, EGFR, IKBKG, TRAF1, TRAF2 and TRAF3. Interacts with BNLF1. Interacts with SQSTM1 upon TNF-alpha stimulation. May interact with MAVS/IPS1. Interacts with ZFAND5. Interacts with RBCK1. Interacts with ZBP1. Interacts with BIRC2/c-IAP1, BIRC3/c-IAP2 and XIAP/BIRC4. Interacts (via kinase domain) with DAB2IP (via Ras-GAP domain); the interaction occurs in a TNF-alpha-dependent manner. Interacts with ARHGEF2. Interacts (via protein kinase domain) with RFFL; involved in RIPK1 ubiquitination. Interacts with RNF34; involved in RIPK1 ubiquitination. Interacts with TICAM1 and this interaction is enhanced in the presence of WDFY1. Interacts with PELI1. Interacts (via death domain) with CRADD (via death domain); the interaction is direct. Component of complex IIa composed of at least RIPK1, FADD and CASP8. Component of the AIM2 PANoptosome complex, a multiprotein complex that drives inflammatory cell death (PANoptosis). Interacts with MAP3K7, CFLAR, CASP8, FADD and NEMO. Interacts with TAX1BP1; this interaction negatively regulates RIPK1 ubiquitination. Interacts with GRB2. Interacts with DDX24; this interaction disrupts RLR signaling activation of IFN-dependent transcription factor IRF7. (Microbial infection) Interacts with mumps virus protein SH; this interaction inhibits downstream NF-kappa-B pathway activation. In terms of assembly, (Microbial infection) Interacts with Murid herpesvirus 1 protein RIR1. As to quaternary structure, (Microbial infection) Interacts (via RIP homotypic interaction motif) with herpes simplex virus 1/HHV-1 protein RIR1/ICP6 (via RIP homotypic interaction motif); this interaction prevents necroptosis activation. (Microbial infection) Interacts (via RIP homotypic interaction motif) with herpes simplex virus 2/HHV-2 protein RIR1/ICP10 (via RIP homotypic interaction motif); this interaction prevents necroptosis activation. (Microbial infection) Proteolytically cleaved by S.flexneri OspD3 within the RIP homotypic interaction motif (RHIM), leading to its degradation and inhibition of necroptosis. In terms of processing, proteolytically cleaved by CASP8 at Asp-324. Cleavage is crucial for limiting TNF-induced apoptosis, necroptosis and inflammatory response. Cleavage abolishes NF-kappa-B activation and enhances the interaction of TRADD with FADD. Proteolytically cleaved by CASP6 during intrinsic apoptosis. Post-translationally, RIPK1 and RIPK3 undergo reciprocal auto- and trans-phosphorylation. Phosphorylation of Ser-161 by RIPK3 is necessary for the formation of the necroptosis-inducing complex. Phosphorylation at Ser-25 represses its kinase activity and consequently prevents TNF-mediated RIPK1-dependent cell death. Phosphorylated at Ser-320 by MAP3K7 which requires prior ubiquitination with 'Lys-63'-linked chains by BIRC2/c-IAP1 and BIRC3/c-IAP2. This phosphorylation positively regulates RIPK1 interaction with RIPK3 to promote necroptosis but negatively regulates RIPK1 kinase activity and its interaction with FADD to mediate apoptosis. Deubiquitinated by USP7; this modification is required for TNF-alpha-induced apoptosis. In terms of processing, ubiquitinated with 'Lys-11'-, 'Lys-48'-, 'Lys-63'- and linear-linked type ubiquitin. Polyubiquitination with 'Lys-63'-linked chains by TRAF2 induces association with the IKK complex. Deubiquitination of 'Lys-63'-linked chains and polyubiquitination with 'Lys-48'-linked chains by TNFAIP3 leads to RIPK1 proteasomal degradation and consequently down-regulates TNF-alpha-induced NF-kappa-B signaling. 'Lys-48'-linked polyubiquitination by RFFL or RNF34 also promotes proteasomal degradation and negatively regulates TNF-alpha-induced NF-kappa-B signaling. Linear polyubiquitinated; the head-to-tail linear polyubiquitination ('Met-1'-linked) is mediated by the LUBAC complex and decreases protein kinase activity. Deubiquitination of linear polyubiquitin by CYLD promotes the kinase activity. Polyubiquitinated with 'Lys-48' and 'Lys-63'-linked chains by BIRC2/c-IAP1 and BIRC3/c-IAP2, leading to activation of NF-kappa-B. Ubiquitinated with 'Lys-63'-linked chains by PELI1. Ubiquitination at Lys-377 with 'Lys-63'-linked chains by BIRC2/c-IAP1 and BIRC3/c-IAP2 is essential for its phosphorylation at Ser-320 mediated by MAP3K7. This ubiquitination is required for NF-kB activation, suppresses RIPK1 kinase activity and plays a critical role in preventing cell death during embryonic development. Post-translationally, (Microbial infection) Glycosylated at Arg-603 by enteropathogenic E.coli protein NleB1: arginine GlcNAcylation prevents homotypic/heterotypic death domain interactions.

It is found in the cytoplasm. Its subcellular location is the cell membrane. The catalysed reaction is L-seryl-[protein] + ATP = O-phospho-L-seryl-[protein] + ADP + H(+). The enzyme catalyses L-threonyl-[protein] + ATP = O-phospho-L-threonyl-[protein] + ADP + H(+). Serine-threonine kinase activity is inhibited by linear polyubiquitination ('Met-1'-linked) by the LUBAC complex. Inhibited by necrostatins, including necrostatin-1, necrostatin-3 and necrostatin-4. Functionally, serine-threonine kinase which is a key regulator of TNF-mediated apoptosis, necroptosis and inflammatory pathways. Exhibits kinase activity-dependent functions that regulate cell death and kinase-independent scaffold functions regulating inflammatory signaling and cell survival. Has kinase-independent scaffold functions: upon binding of TNF to TNFR1, RIPK1 is recruited to the TNF-R1 signaling complex (TNF-RSC also known as complex I) where it acts as a scaffold protein promoting cell survival, in part, by activating the canonical NF-kappa-B pathway. Kinase activity is essential to regulate necroptosis and apoptosis, two parallel forms of cell death: upon activation of its protein kinase activity, regulates assembly of two death-inducing complexes, namely complex IIa (RIPK1-FADD-CASP8), which drives apoptosis, and the complex IIb (RIPK1-RIPK3-MLKL), which drives necroptosis. RIPK1 is required to limit CASP8-dependent TNFR1-induced apoptosis. In normal conditions, RIPK1 acts as an inhibitor of RIPK3-dependent necroptosis, a process mediated by RIPK3 component of complex IIb, which catalyzes phosphorylation of MLKL upon induction by ZBP1. Inhibits RIPK3-mediated necroptosis via FADD-mediated recruitment of CASP8, which cleaves RIPK1 and limits TNF-induced necroptosis. Required to inhibit apoptosis and necroptosis during embryonic development: acts by preventing the interaction of TRADD with FADD thereby limiting aberrant activation of CASP8. In addition to apoptosis and necroptosis, also involved in inflammatory response by promoting transcriptional production of pro-inflammatory cytokines, such as interleukin-6 (IL6). Phosphorylates RIPK3: RIPK1 and RIPK3 undergo reciprocal auto- and trans-phosphorylation. Phosphorylates DAB2IP at 'Ser-728' in a TNF-alpha-dependent manner, and thereby activates the MAP3K5-JNK apoptotic cascade. Required for ZBP1-induced NF-kappa-B activation in response to DNA damage. In Homo sapiens (Human), this protein is Receptor-interacting serine/threonine-protein kinase 1.